A 209-amino-acid chain; its full sequence is Thymidine kinase (209 aa).

Residues 9–16 (SAMNAGKT) and 88–91 (DEAQ) contribute to the ATP site. Residue Glu-89 is the Proton acceptor of the active site.

This sequence belongs to the thymidine kinase family. As to quaternary structure, homotetramer.

The protein resides in the cytoplasm. The enzyme catalyses thymidine + ATP = dTMP + ADP + H(+). This Xanthomonas oryzae pv. oryzae (strain MAFF 311018) protein is Thymidine kinase.